Here is a 169-residue protein sequence, read N- to C-terminus: Ribosome maturation factor RimM (169 aa).

The PRC barrel domain maps to 97 to 169 (EDEVYFKDLI…KIVVDWEYDY (73 aa)).

The protein belongs to the RimM family. Binds ribosomal protein uS19.

It localises to the cytoplasm. Functionally, an accessory protein needed during the final step in the assembly of 30S ribosomal subunit, possibly for assembly of the head region. Essential for efficient processing of 16S rRNA. May be needed both before and after RbfA during the maturation of 16S rRNA. It has affinity for free ribosomal 30S subunits but not for 70S ribosomes. This is Ribosome maturation factor RimM from Francisella tularensis subsp. holarctica (strain FTNF002-00 / FTA).